A 1508-amino-acid polypeptide reads, in one-letter code: Ras guanine nucleotide exchange factor Y (1508 aa).

8 disordered regions span residues 1-73 (MIII…NNNE), 128-182 (KVLS…PKSV), 197-272 (IDNN…YSTS), 396-517 (ILQC…EDED), 565-593 (LSEN…SIPT), 606-727 (LPNI…AEPS), 831-1021 (NVII…SNKE), and 1153-1172 (TNED…TNKN). Composition is skewed to low complexity over residues 9 to 22 (NINN…NNNS) and 33 to 72 (NNNN…NNNN). Polar residues-rich tracts occupy residues 128–150 (KVLS…TNTI) and 172–182 (DRTSQDIPKSV). A compositionally biased stretch (low complexity) spans 199–216 (NNTTNNNSNNNNNSSLST). The segment covering 223–232 (DSLETNPIKD) has biased composition (basic and acidic residues). The segment covering 233-250 (EESEESEESEESKEEEEE) has biased composition (acidic residues). A compositionally biased stretch (low complexity) spans 255–272 (IKTTKTTSETIESSYSTS). Residues 399-409 (CKDDSSSKDQD) are compositionally biased toward basic and acidic residues. Residues 413–447 (NNSAGSSGNSSASNSNRNSIAFSSSNHFSSESSQS) are compositionally biased toward low complexity. Positions 465–475 (PQSPSPSPSPP) are enriched in pro residues. Residues 492–510 (FNQQTNFSVSPTKSPSNEK) show a composition bias toward polar residues. Low complexity-rich tracts occupy residues 574 to 593 (NQPS…SIPT), 606 to 660 (LPNI…LTES), 668 to 687 (NNNN…NNNN), 831 to 855 (NVII…NTVK), 862 to 891 (NKSS…SLTP), 942 to 984 (SLWS…SPPT), 993 to 1019 (ITTG…NNSN), and 1160 to 1172 (SNSN…TNKN). Residues 659–686 (ESLKTRIEENNNNNNNKNINNNNNNNNN) adopt a coiled-coil conformation. An N-terminal Ras-GEF domain is found at 1074–1234 (NRIKVRSASL…IILKIIDRKA (161 aa)). The Ras-GEF domain occupies 1278–1508 (DDLEIARQLT…LYKQSKIIEP (231 aa)).

Its function is as follows. Promotes the exchange of Ras-bound GDP by GTP. The polypeptide is Ras guanine nucleotide exchange factor Y (gefY) (Dictyostelium discoideum (Social amoeba)).